Consider the following 548-residue polypeptide: Membrane protein insertase YidC (548 aa).

A helical membrane pass occupies residues 6-26; sequence NLFLIAFLFVSFMIWQAWQTD. The tract at residues 30 to 53 is disordered; that stretch reads QPLQTQTTQNTTSAAGDAVNQGVP. Transmembrane regions (helical) follow at residues 345-365, 420-440, 458-478, and 499-519; these read KFLH…TFIV, LGGC…YYML, LAAQ…MFFI, and PVIF…YYIV.

This sequence belongs to the OXA1/ALB3/YidC family. Type 1 subfamily. Interacts with the Sec translocase complex via SecD. Specifically interacts with transmembrane segments of nascent integral membrane proteins during membrane integration.

It localises to the cell inner membrane. Functionally, required for the insertion and/or proper folding and/or complex formation of integral membrane proteins into the membrane. Involved in integration of membrane proteins that insert both dependently and independently of the Sec translocase complex, as well as at least some lipoproteins. Aids folding of multispanning membrane proteins. This is Membrane protein insertase YidC from Erwinia tasmaniensis (strain DSM 17950 / CFBP 7177 / CIP 109463 / NCPPB 4357 / Et1/99).